A 313-amino-acid chain; its full sequence is Olfactory receptor 56A5 (313 aa).

The Extracellular portion of the chain corresponds to 1-33; sequence MTLPSNNSTSPVFEFFLICFPSFQSWQHWLSLP. Residues Asn-6 and Asn-7 are each glycosylated (N-linked (GlcNAc...) asparagine). A helical transmembrane segment spans residues 34–54; the sequence is LSLLFLLAMGANATLLITIYL. The Cytoplasmic portion of the chain corresponds to 55 to 67; that stretch reads EASLHQPLYYLLS. Residues 68-88 form a helical membrane-spanning segment; sequence LLSLLDIVLCLTVIPKVLAIF. At 89–100 the chain is on the extracellular side; sequence WFDLRSISFPAC. A disulfide bridge links Cys-100 with Cys-182. A helical transmembrane segment spans residues 101 to 121; it reads FLQVFIMNSFLTMESCTFMIM. The Cytoplasmic segment spans residues 122-146; sequence AYDRYVAICKPLQYSSIITDQFVAR. The helical transmembrane segment at 147–167 threads the bilayer; the sequence is AAIFVVARNGLLTMPIPILSS. The Extracellular segment spans residues 168 to 203; that stretch reads RLRYCAGHIIKNCICTNVSVSKLSCDDITLNQSYQF. N-linked (GlcNAc...) asparagine glycans are attached at residues Asn-184 and Asn-198. Residues 204–224 traverse the membrane as a helical segment; it reads VIGWTLLGSDLILIVLSYFFI. The Cytoplasmic segment spans residues 225-246; the sequence is LKTVLRIKGEGDMAKALGTCGS. A helical transmembrane segment spans residues 247–267; it reads HFILILFFTTVLLVLVITNLA. The Extracellular segment spans residues 268-276; that stretch reads RKRIPPDVP. A helical membrane pass occupies residues 277-297; sequence ILLNILHHLIPPALNPIVYGV. The Cytoplasmic segment spans residues 298–313; it reads RTKEIKQGIQNLLRRL.

This sequence belongs to the G-protein coupled receptor 1 family.

Its subcellular location is the cell membrane. In terms of biological role, odorant receptor. In Homo sapiens (Human), this protein is Olfactory receptor 56A5 (OR56A5).